Consider the following 284-residue polypeptide: 4-diphosphocytidyl-2-C-methyl-D-erythritol kinase (284 aa).

Lys14 is a catalytic residue. ATP is bound at residue 98 to 108; that stretch reads PMGGGLGGGSS. The active site involves Asp140.

This sequence belongs to the GHMP kinase family. IspE subfamily.

The enzyme catalyses 4-CDP-2-C-methyl-D-erythritol + ATP = 4-CDP-2-C-methyl-D-erythritol 2-phosphate + ADP + H(+). It participates in isoprenoid biosynthesis; isopentenyl diphosphate biosynthesis via DXP pathway; isopentenyl diphosphate from 1-deoxy-D-xylulose 5-phosphate: step 3/6. Its function is as follows. Catalyzes the phosphorylation of the position 2 hydroxy group of 4-diphosphocytidyl-2C-methyl-D-erythritol. The polypeptide is 4-diphosphocytidyl-2-C-methyl-D-erythritol kinase (Shewanella sp. (strain MR-4)).